We begin with the raw amino-acid sequence, 115 residues long: Large ribosomal subunit protein bL19 (115 aa).

Belongs to the bacterial ribosomal protein bL19 family.

Functionally, this protein is located at the 30S-50S ribosomal subunit interface and may play a role in the structure and function of the aminoacyl-tRNA binding site. In Koribacter versatilis (strain Ellin345), this protein is Large ribosomal subunit protein bL19.